The following is an 86-amino-acid chain: Large ribosomal subunit protein bL27 (86 aa).

Positions 1–10 (MAQKKGGGST) are enriched in gly residues. A disordered region spans residues 1–20 (MAQKKGGGSTRNGRDSESKR).

The protein belongs to the bacterial ribosomal protein bL27 family.

The protein is Large ribosomal subunit protein bL27 of Polynucleobacter necessarius subsp. necessarius (strain STIR1).